We begin with the raw amino-acid sequence, 269 residues long: Hydroxyethylthiazole kinase (269 aa).

Substrate is bound at residue Met46. ATP-binding residues include Arg122 and Thr168. Substrate is bound at residue Gly195.

Belongs to the Thz kinase family. It depends on Mg(2+) as a cofactor.

The enzyme catalyses 5-(2-hydroxyethyl)-4-methylthiazole + ATP = 4-methyl-5-(2-phosphooxyethyl)-thiazole + ADP + H(+). Its pathway is cofactor biosynthesis; thiamine diphosphate biosynthesis; 4-methyl-5-(2-phosphoethyl)-thiazole from 5-(2-hydroxyethyl)-4-methylthiazole: step 1/1. Its function is as follows. Catalyzes the phosphorylation of the hydroxyl group of 4-methyl-5-beta-hydroxyethylthiazole (THZ). The sequence is that of Hydroxyethylthiazole kinase from Geobacillus kaustophilus (strain HTA426).